We begin with the raw amino-acid sequence, 54 residues long: Large ribosomal subunit protein bL33A (54 aa).

It belongs to the bacterial ribosomal protein bL33 family.

The sequence is that of Large ribosomal subunit protein bL33A from Myxococcus xanthus (strain DK1622).